The following is a 202-amino-acid chain: Ribonuclease HII (202 aa).

Residues 12 to 201 (LLIAGVDEAG…VRQLKLFIPE (190 aa)) form the RNase H type-2 domain. A divalent metal cation is bound by residues Asp18, Glu19, and Asp110.

This sequence belongs to the RNase HII family. It depends on Mn(2+) as a cofactor. The cofactor is Mg(2+).

The protein localises to the cytoplasm. The catalysed reaction is Endonucleolytic cleavage to 5'-phosphomonoester.. Its function is as follows. Endonuclease that specifically degrades the RNA of RNA-DNA hybrids. In Coxiella burnetii (strain CbuG_Q212) (Coxiella burnetii (strain Q212)), this protein is Ribonuclease HII.